A 118-amino-acid polypeptide reads, in one-letter code: Fluoride-specific ion channel FluC 1 (118 aa).

Transmembrane regions (helical) follow at residues 5 to 25 (FLLVGFGAALGAMLRYGISVL) and 47 to 67 (FLLGFLVSSALGPVWQLFLGT). G71 and T74 together coordinate Na(+). The helical transmembrane segment at 98–118 (YLGFTYVFGLIAAFLGMMLGV) threads the bilayer.

Belongs to the fluoride channel Fluc/FEX (TC 1.A.43) family.

It is found in the cell membrane. It carries out the reaction fluoride(in) = fluoride(out). Na(+) is not transported, but it plays an essential structural role and its presence is essential for fluoride channel function. Functionally, fluoride-specific ion channel. Important for reducing fluoride concentration in the cell, thus reducing its toxicity. This is Fluoride-specific ion channel FluC 1 from Listeria monocytogenes serovar 1/2a (strain ATCC BAA-679 / EGD-e).